The following is a 760-amino-acid chain: MSKRSKLLKRRMLSLSVICVLIGYGPVFNPVRSQAKVMTYSSENRELPENTKDGVMLHAFDWSFNNIKKELPSIAAAGYKAVQVSPVQGTKSNSTNSSDWWLLYQPTNQAIGNAQLGSYDDFKSLCSEAKNYGISIVVDVVMNHMANNGNDDEVASEVDPSFKDPSLYHHNGQCTDWNNRQDVTQEGIGMPDLNTQSSAVQSKAITFLNQCVDAGATGFRFDAAKHIETDLGLDANKSWSGNYWENVLGSLHNKSNLYIYGEVLQDGKVDNISAYESFMNVEASAYDGSLRGAIKSGDLTNAQGMGGLDSNKCVDMLETHDEYEHNESKDLTDWQRKAGWAIAASRAGSVPLFFDRPTGNIGSEGDALWKDSDVVAVNEFHNAMAGQNEYLRLQNNNKAMIIERGSKGAVIVNEGDSFNLNTPTNLEDGNYDNHGSATDSLTVSQGRMTGTVPANSIIVIYNKNSNPGSDRVTLSEQAAKAGDSVTITYDAGTTALKDASNVNLYWGYDGFSAATSKAMTSLGDNKWQTTITVPKEVTKNVNFSFTDGTSWDNNNGANWNIPLASNYLPHAGYKVDYDSSNLVSGNNFTIYYNGNLANSSNVSLHWGVNGWSNMQNLAMVKDSNGFWEATIAIPASSNTLNFCFTNGSSWDNNNNNNWTLNTWSSVPKVQVTPAPEACKQISVYYNGSLASSASNITLHWGCNGFTSPQDINMVKQADGRWLANITLPSGCYNVNMAFKDQSGTWDNNNSNNYNFSSTNN.

An N-terminal signal peptide occupies residues 1–34 (MSKRSKLLKRRMLSLSVICVLIGYGPVFNPVRSQ). Asn-143, Thr-184, and Asp-192 together coordinate Ca(2+). Asp-222 serves as the catalytic Nucleophile. Position 226 (His-226) interacts with Ca(2+). Glu-262 acts as the Proton donor in catalysis.

Belongs to the glycosyl hydrolase 13 family. As to quaternary structure, monomer. Ca(2+) serves as cofactor.

It catalyses the reaction Endohydrolysis of (1-&gt;4)-alpha-D-glucosidic linkages in polysaccharides containing three or more (1-&gt;4)-alpha-linked D-glucose units.. This chain is Alpha-amylase (amyA), found in Clostridium acetobutylicum (strain ATCC 824 / DSM 792 / JCM 1419 / IAM 19013 / LMG 5710 / NBRC 13948 / NRRL B-527 / VKM B-1787 / 2291 / W).